The chain runs to 71 residues: MAFLKKSLFLVLFLGLVSLSICEEEKRENEMEQEDDEQSEMKRGLWSKIKDAAKTAGKAALGFVNEMVGEQ.

The first 22 residues, Met1–Cys22, serve as a signal peptide directing secretion. A propeptide spanning residues Glu23–Arg43 is cleaved from the precursor. At Val68 the chain carries Valine amide. Positions Gly69–Gln71 are excised as a propeptide.

Belongs to the frog skin active peptide (FSAP) family. Dermaseptin subfamily. Expressed by the skin glands.

It is found in the secreted. Its subcellular location is the target cell membrane. In terms of biological role, antimicrobial peptide with activity against fungi, Gram-positive and Gram-negative bacteria. Is active against S.aureus (MIC=16 uM), MRSA (MIC=32 uM), E.faecalis (MIC=16 uM), E.coli (MIC=8 uM), P.aeruginosa (MIC=16 uM), K.pneumoniae (MIC=8 uM), and C.albicans (MIC=64 uM). Also inhibits biofilm formation. Acts by disrupting cell membranes. Also exhibits anti-proliferative effect against various human cancer cells. Shows weak hemolytic activity towards horse erythrocytes. This Phyllomedusa tarsius (Brownbelly leaf frog) protein is Dermaseptin-PT9.